A 714-amino-acid polypeptide reads, in one-letter code: ATP-dependent DNA helicase DinG (714 aa).

One can recognise a Helicase ATP-binding domain in the interval Ala-17 to Thr-294. Ala-54–Thr-61 contacts ATP. Residues Cys-120, Cys-194, Cys-199, and Cys-205 each contribute to the [4Fe-4S] cluster site. Positions Asp-248 to His-251 match the DEAH box motif. Positions His-517–Pro-698 constitute a Helicase C-terminal domain.

This sequence belongs to the helicase family. DinG subfamily. Type 1 sub-subfamily. [4Fe-4S] cluster is required as a cofactor.

It catalyses the reaction Couples ATP hydrolysis with the unwinding of duplex DNA at the replication fork by translocating in the 5'-3' direction. This creates two antiparallel DNA single strands (ssDNA). The leading ssDNA polymer is the template for DNA polymerase III holoenzyme which synthesizes a continuous strand.. The catalysed reaction is ATP + H2O = ADP + phosphate + H(+). Its function is as follows. DNA-dependent ATPase and 5'-3' DNA helicase. Unwinds D-loops, R-loops, forked DNA and G-quadruplex DNA. The polypeptide is ATP-dependent DNA helicase DinG (Salmonella typhimurium (strain LT2 / SGSC1412 / ATCC 700720)).